Reading from the N-terminus, the 218-residue chain is Ribose-5-phosphate isomerase A (218 aa).

Substrate contacts are provided by residues 28–31 (TGST), 81–84 (DGAD), and 94–97 (KGGG). Residue E103 is the Proton acceptor of the active site. K121 contacts substrate.

The protein belongs to the ribose 5-phosphate isomerase family. In terms of assembly, homodimer.

It catalyses the reaction aldehydo-D-ribose 5-phosphate = D-ribulose 5-phosphate. It functions in the pathway carbohydrate degradation; pentose phosphate pathway; D-ribose 5-phosphate from D-ribulose 5-phosphate (non-oxidative stage): step 1/1. Catalyzes the reversible conversion of ribose-5-phosphate to ribulose 5-phosphate. This chain is Ribose-5-phosphate isomerase A, found in Colwellia psychrerythraea (strain 34H / ATCC BAA-681) (Vibrio psychroerythus).